Consider the following 319-residue polypeptide: Solute carrier family 25 member 34 (319 aa).

The segment at 1–22 (MNSAFSGPSSPTPGPSPPRPPL) is disordered. Over residues 10–22 (SPTPGPSPPRPPL) the composition is skewed to pro residues. 3 Solcar repeats span residues 22 to 115 (LWPP…MQAA), 119 to 212 (DGPC…AKDW), and 222 to 313 (LSSL…LRQR). 6 helical membrane-spanning segments follow: residues 25–45 (PLDFGLGALACCGACVFTNPL), 63–83 (SYRRLYRGVLQALWVVGRTDG), 116–138 (GVTDGPCCSLIAGAAAGALGAFI), 188–209 (VNGAVPRVMVGSATQLATFSSA), 224–244 (SLNTLCAAVMSGVAVSIIMTP), and 296–319 (LAPHTTLSMLLWDVLRQRALPYTH).

This sequence belongs to the mitochondrial carrier (TC 2.A.29) family.

It is found in the mitochondrion inner membrane. This is Solute carrier family 25 member 34 (slc25a34) from Danio rerio (Zebrafish).